We begin with the raw amino-acid sequence, 326 residues long: Ornithine carbamoyltransferase (326 aa).

Residues 54-57, Gln-81, Arg-105, and 132-135 each bind carbamoyl phosphate; these read STRT and HPTQ. Residues Asn-164, Asp-225, and 229 to 230 contribute to the L-ornithine site; that span reads SM. Carbamoyl phosphate-binding positions include 266-267 and Arg-311; that span reads CL.

Belongs to the aspartate/ornithine carbamoyltransferase superfamily. OTCase family.

It localises to the cytoplasm. It catalyses the reaction carbamoyl phosphate + L-ornithine = L-citrulline + phosphate + H(+). It participates in amino-acid biosynthesis; L-arginine biosynthesis; L-arginine from L-ornithine and carbamoyl phosphate: step 1/3. Functionally, reversibly catalyzes the transfer of the carbamoyl group from carbamoyl phosphate (CP) to the N(epsilon) atom of ornithine (ORN) to produce L-citrulline. The protein is Ornithine carbamoyltransferase (argF) of Streptococcus mutans serotype c (strain ATCC 700610 / UA159).